The sequence spans 190 residues: Peptidyl-tRNA hydrolase (190 aa).

A tRNA-binding site is contributed by Tyr14. His19 functions as the Proton acceptor in the catalytic mechanism. Residues Tyr64 and Asn66 each coordinate tRNA.

Belongs to the PTH family. In terms of assembly, monomer.

The protein localises to the cytoplasm. The enzyme catalyses an N-acyl-L-alpha-aminoacyl-tRNA + H2O = an N-acyl-L-amino acid + a tRNA + H(+). Its function is as follows. Hydrolyzes ribosome-free peptidyl-tRNAs (with 1 or more amino acids incorporated), which drop off the ribosome during protein synthesis, or as a result of ribosome stalling. Functionally, catalyzes the release of premature peptidyl moieties from peptidyl-tRNA molecules trapped in stalled 50S ribosomal subunits, and thus maintains levels of free tRNAs and 50S ribosomes. This Rhodopirellula baltica (strain DSM 10527 / NCIMB 13988 / SH1) protein is Peptidyl-tRNA hydrolase.